Here is a 70-residue protein sequence, read N- to C-terminus: Small, acid-soluble spore protein 1 (70 aa).

This sequence belongs to the alpha/beta-type SASP family.

SASP are bound to spore DNA. They are double-stranded DNA-binding proteins that cause DNA to change to an a-like conformation. They protect the DNA backbone from chemical and enzymatic cleavage and are thus involved in dormant spore's high resistance to UV light. The protein is Small, acid-soluble spore protein 1 (sasP-1) of Bacillus cereus.